The sequence spans 656 residues: DNA mismatch repair protein MutL (656 aa).

Residues 385–427 (DNSDSLTEQNSTDYTVNQPETGSVSEKITDRTVESSNEFTDRT) are disordered. Residues 387–410 (SDSLTEQNSTDYTVNQPETGSVSE) show a composition bias toward polar residues. The segment covering 411–427 (KITDRTVESSNEFTDRT) has biased composition (basic and acidic residues).

It belongs to the DNA mismatch repair MutL/HexB family.

In terms of biological role, this protein is involved in the repair of mismatches in DNA. It is required for dam-dependent methyl-directed DNA mismatch repair. May act as a 'molecular matchmaker', a protein that promotes the formation of a stable complex between two or more DNA-binding proteins in an ATP-dependent manner without itself being part of a final effector complex. The protein is DNA mismatch repair protein MutL of Lactococcus lactis subsp. cremoris (strain SK11).